Here is a 227-residue protein sequence, read N- to C-terminus: DNA repair protein RecO (227 aa).

Belongs to the RecO family.

Involved in DNA repair and RecF pathway recombination. The protein is DNA repair protein RecO of Pseudomonas putida (strain ATCC 47054 / DSM 6125 / CFBP 8728 / NCIMB 11950 / KT2440).